The primary structure comprises 328 residues: RNA-binding protein KhpB (328 aa).

Residues 3–53 form a jag_N domain region; the sequence is VFTGSTVEEAIQKGLKELDIPRMKAHIKVISREKKGFLGLFGKKPAQVDIE. Positions 54–180 are linker; the sequence is AISETTVVKA…GLKVETNFDI (127 aa). Phosphothreonine is present on Thr89. The 78-residue stretch at 181-258 folds into the KH domain; it reads EQVATEVMAY…SRTFYVTINV (78 aa). The R3H domain occupies 263-328; the sequence is EHRAEVLQTY…PNRYVVVDTE (66 aa).

This sequence belongs to the KhpB RNA-binding protein family. Interacts with KhpA; the 2 proteins colocalize throughout the cell cycle, with some increase at midcell in dividing cells. Interacts with StkP which phosphorylates it, interacts with MltG, MreC, RodZ and YidC2. In terms of processing, phosphorylated on Thr-89 by StkP; there is another poorly phosphorylated residue in the protein. Dephosphorylated by PhpP.

It is found in the cytoplasm. A probable RNA chaperone. Forms a complex with KhpA which binds to cellular RNA and controls its expression. Plays a role in peptidoglycan (PG) homeostasis and cell length regulation. Its function is as follows. Forms a complex with KhpA which presumably binds to about 170 cellular RNAs (mRNA, tRNA intergenic RNA and sRNAs); the proteins alone each bind the same set of RNAs. Suppresses the requirement for PBP2b (penA, a transpeptidase) in peripheral peptidoglycan (PG) synthesis. May function as a pleiotropic RNA chaperone controlling pneumococcal cell division, including PG homeostasis and regulating peripheral PG synthesis by the elongasome. The protein is RNA-binding protein KhpB of Streptococcus pneumoniae serotype 2 (strain D39 / NCTC 7466).